The primary structure comprises 237 residues: Ubiquinone biosynthesis O-methyltransferase (237 aa).

Arginine 38, glycine 58, aspartate 79, and methionine 124 together coordinate S-adenosyl-L-methionine.

It belongs to the methyltransferase superfamily. UbiG/COQ3 family.

It carries out the reaction a 3-demethylubiquinol + S-adenosyl-L-methionine = a ubiquinol + S-adenosyl-L-homocysteine + H(+). It catalyses the reaction a 3-(all-trans-polyprenyl)benzene-1,2-diol + S-adenosyl-L-methionine = a 2-methoxy-6-(all-trans-polyprenyl)phenol + S-adenosyl-L-homocysteine + H(+). Its pathway is cofactor biosynthesis; ubiquinone biosynthesis. Functionally, O-methyltransferase that catalyzes the 2 O-methylation steps in the ubiquinone biosynthetic pathway. This is Ubiquinone biosynthesis O-methyltransferase from Acinetobacter baumannii (strain ACICU).